Reading from the N-terminus, the 509-residue chain is Lysine--tRNA ligase (509 aa).

Glu419 and Glu426 together coordinate Mg(2+).

This sequence belongs to the class-II aminoacyl-tRNA synthetase family. In terms of assembly, homodimer. The cofactor is Mg(2+).

It is found in the cytoplasm. The enzyme catalyses tRNA(Lys) + L-lysine + ATP = L-lysyl-tRNA(Lys) + AMP + diphosphate. This chain is Lysine--tRNA ligase, found in Methylobacillus flagellatus (strain ATCC 51484 / DSM 6875 / VKM B-1610 / KT).